A 289-amino-acid polypeptide reads, in one-letter code: Arabinogalactan O-methyltransferase 1 (289 aa).

Residues I12–I32 traverse the membrane as a helical segment.

The protein belongs to the methyltransferase superfamily. In terms of assembly, binds to the translation initiation factors TIF3E1.

The protein localises to the golgi apparatus membrane. Functionally, involved in the methylation of glucuronic acid of different plant cell wall component, but mainly on side chains of arabinogalactans. In Arabidopsis thaliana (Mouse-ear cress), this protein is Arabinogalactan O-methyltransferase 1 (AGM1).